We begin with the raw amino-acid sequence, 352 residues long: Beta-methylmalyl-CoA dehydratase (352 aa).

Positions leucine 16–serine 129 constitute a MaoC-like domain. Substrate contacts are provided by residues proline 62 to serine 65, isoleucine 85 to leucine 88, and glycine 96 to valine 98.

Homodimer.

The catalysed reaction is (2R,3S)-beta-methylmalyl-CoA = 2-methylfumaryl-CoA + H2O. Its function is as follows. Involved in the glyoxylate assimilation cycle used to regenerate acetyl-CoA and produce pyruvate as universal precursor for biosynthesis. Catalyzes the reversible dehydration of beta-methylmalyl-CoA ((2R,3S)-beta-methylmalyl-CoA) to yield mesaconyl-CoA (2-methylfumaryl-CoA). The polypeptide is Beta-methylmalyl-CoA dehydratase (mch) (Chloroflexus aurantiacus (strain ATCC 29366 / DSM 635 / J-10-fl)).